We begin with the raw amino-acid sequence, 273 residues long: HTH-type transcriptional activator RhaS (273 aa).

Residues 174–272 (YQLLDWLQNN…SQSPRDLRSQ (99 aa)) form the HTH araC/xylS-type domain. 2 consecutive DNA-binding regions (H-T-H motif) follow at residues 191-212 (PELA…KNKT) and 239-262 (VTDI…KREF).

As to quaternary structure, binds DNA as a dimer.

Its subcellular location is the cytoplasm. In terms of biological role, activates expression of the rhaBAD and rhaT operons. This is HTH-type transcriptional activator RhaS from Yersinia pseudotuberculosis serotype I (strain IP32953).